The sequence spans 542 residues: Hydroxylamine reductase (542 aa).

[4Fe-4S] cluster is bound by residues cysteine 3, cysteine 6, cysteine 15, and cysteine 21. Hybrid [4Fe-2O-2S] cluster-binding residues include histidine 238, glutamate 262, cysteine 307, cysteine 398, cysteine 426, cysteine 451, glutamate 485, and lysine 487. Cysteine 398 is subject to Cysteine persulfide.

It belongs to the HCP family. Requires [4Fe-4S] cluster as cofactor. Hybrid [4Fe-2O-2S] cluster is required as a cofactor.

The protein localises to the cytoplasm. It carries out the reaction A + NH4(+) + H2O = hydroxylamine + AH2 + H(+). In terms of biological role, catalyzes the reduction of hydroxylamine to form NH(3) and H(2)O. The chain is Hydroxylamine reductase from Microcystis aeruginosa (strain NIES-843 / IAM M-2473).